Consider the following 101-residue polypeptide: Small ribosomal subunit protein uS14 (101 aa).

It belongs to the universal ribosomal protein uS14 family. As to quaternary structure, part of the 30S ribosomal subunit. Contacts proteins S3 and S10.

Binds 16S rRNA, required for the assembly of 30S particles and may also be responsible for determining the conformation of the 16S rRNA at the A site. The protein is Small ribosomal subunit protein uS14 of Alkalilimnicola ehrlichii (strain ATCC BAA-1101 / DSM 17681 / MLHE-1).